A 251-amino-acid chain; its full sequence is MILYEYPFNERIRTLLRLEDLFERFAFFLAQEDPREHHVALTTLFEIAEVTGRADLKSDLMKELERQRQTLAPFRGNPGIEQNALEAVLGEIEQTLANLAQMQGKTGQHLVDNEWLASIRSRAVIPGGTCKFDLPSYYAWQQWPAEQRRQDIAKWVLPMLPLRDAAAIVLRLARESGQASKVMAMQGSYQQMLSGRTYQLMQVRVAPELRVIPEASANKYMLWVRFTMQDGDVRPRAVDIDVPFHLTLCNL.

Belongs to the ZapD family. Interacts with FtsZ.

It localises to the cytoplasm. Its function is as follows. Cell division factor that enhances FtsZ-ring assembly. Directly interacts with FtsZ and promotes bundling of FtsZ protofilaments, with a reduction in FtsZ GTPase activity. This Burkholderia cenocepacia (strain ATCC BAA-245 / DSM 16553 / LMG 16656 / NCTC 13227 / J2315 / CF5610) (Burkholderia cepacia (strain J2315)) protein is Cell division protein ZapD.